Reading from the N-terminus, the 341-residue chain is Nicotinate-nucleotide--dimethylbenzimidazole phosphoribosyltransferase (341 aa).

The active-site Proton acceptor is Glu-310.

It belongs to the CobT family.

The catalysed reaction is 5,6-dimethylbenzimidazole + nicotinate beta-D-ribonucleotide = alpha-ribazole 5'-phosphate + nicotinate + H(+). It participates in nucleoside biosynthesis; alpha-ribazole biosynthesis; alpha-ribazole from 5,6-dimethylbenzimidazole: step 1/2. In terms of biological role, catalyzes the synthesis of alpha-ribazole-5'-phosphate from nicotinate mononucleotide (NAMN) and 5,6-dimethylbenzimidazole (DMB). The polypeptide is Nicotinate-nucleotide--dimethylbenzimidazole phosphoribosyltransferase (Vibrio cholerae serotype O1 (strain ATCC 39315 / El Tor Inaba N16961)).